The primary structure comprises 286 residues: NH(3)-dependent NAD(+) synthetase (286 aa).

43 to 50 (GVSGGVDS) is a binding site for ATP. Asp49 is a Mg(2+) binding site. Arg131 contributes to the deamido-NAD(+) binding site. Thr151 is an ATP binding site. Glu156 contributes to the Mg(2+) binding site. Deamido-NAD(+)-binding residues include Lys164 and Asp171. ATP-binding residues include Lys180 and Ser202. The segment at 257-286 (HEASSHKRSPPASPDLGEIKKHYKQHAGKK) is disordered. 262 to 263 (HK) is a deamido-NAD(+) binding site. Residues 277 to 286 (KHYKQHAGKK) show a composition bias toward basic residues.

It belongs to the NAD synthetase family. As to quaternary structure, homodimer.

The enzyme catalyses deamido-NAD(+) + NH4(+) + ATP = AMP + diphosphate + NAD(+) + H(+). It participates in cofactor biosynthesis; NAD(+) biosynthesis; NAD(+) from deamido-NAD(+) (ammonia route): step 1/1. Catalyzes the ATP-dependent amidation of deamido-NAD to form NAD. Uses ammonia as a nitrogen source. The chain is NH(3)-dependent NAD(+) synthetase from Aeropyrum pernix (strain ATCC 700893 / DSM 11879 / JCM 9820 / NBRC 100138 / K1).